The primary structure comprises 271 residues: Phosphate import ATP-binding protein PstB (271 aa).

Residues 13–266 (VRTAPVSEAE…PKHPYTEAYI (254 aa)) form the ABC transporter domain. 57–64 (GPSGCGKS) serves as a coordination point for ATP.

The protein belongs to the ABC transporter superfamily. Phosphate importer (TC 3.A.1.7) family. The complex is composed of two ATP-binding proteins (PstB), two transmembrane proteins (PstC and PstA) and a solute-binding protein (PstS).

The protein localises to the cell inner membrane. It carries out the reaction phosphate(out) + ATP + H2O = ADP + 2 phosphate(in) + H(+). In terms of biological role, part of the ABC transporter complex PstSACB involved in phosphate import. Responsible for energy coupling to the transport system. This is Phosphate import ATP-binding protein PstB from Thermus thermophilus (strain ATCC 27634 / DSM 579 / HB8).